The primary structure comprises 498 residues: ATP synthase subunit beta, chloroplastic (498 aa).

172–179 (GGAGVGKT) serves as a coordination point for ATP.

It belongs to the ATPase alpha/beta chains family. In terms of assembly, F-type ATPases have 2 components, CF(1) - the catalytic core - and CF(0) - the membrane proton channel. CF(1) has five subunits: alpha(3), beta(3), gamma(1), delta(1), epsilon(1). CF(0) has four main subunits: a(1), b(1), b'(1) and c(9-12).

It localises to the plastid. It is found in the chloroplast thylakoid membrane. The catalysed reaction is ATP + H2O + 4 H(+)(in) = ADP + phosphate + 5 H(+)(out). In terms of biological role, produces ATP from ADP in the presence of a proton gradient across the membrane. The catalytic sites are hosted primarily by the beta subunits. This Nicotiana tomentosiformis (Tobacco) protein is ATP synthase subunit beta, chloroplastic.